A 187-amino-acid polypeptide reads, in one-letter code: Probable chorismate pyruvate-lyase (187 aa).

Positions 81, 119, and 178 each coordinate substrate.

The protein belongs to the UbiC family.

It is found in the cytoplasm. The enzyme catalyses chorismate = 4-hydroxybenzoate + pyruvate. It functions in the pathway cofactor biosynthesis; ubiquinone biosynthesis. In terms of biological role, removes the pyruvyl group from chorismate, with concomitant aromatization of the ring, to provide 4-hydroxybenzoate (4HB) for the ubiquinone pathway. In Thiobacillus denitrificans (strain ATCC 25259 / T1), this protein is Probable chorismate pyruvate-lyase.